The chain runs to 430 residues: MIDSLDLVIDTIVAREVLDSRGNPTVEAEVLLEGGAMGRAIVPSGASTGAHEAHELRDGGDRYMGKGVSQAVTHIEERIAPTLCGLSALDQAAVDAAMLELDGSDNKSSLGANAILAVSMATARAAANGLGLPLYRYLGGPMANLLPVPLMNVINGGAHAANSLDFQEFMLVPHGAPSFREALRMGTEVFHTLKGLLKAKGMSTSVGDEGGFAPDLGNVEAGEILVEAITKAGYKPGEQISLALDVASTEFFENGRYAFDGGNYDSAEMVGQLEQLVEKFPIVSIEDGLAEDDWEGWKLLTERLGGKVQLVGDDLFVTNTKRLQQGIDNSTANSILIKVNQIGSLTETLQAIDLAGRSGYTSVISHRSGETEDTTIADLSVATRAGQIKTGSLSRSERVAKYNQLLRIEDELGSQAVYAGAVGQGPRGNA.

Q167 is a (2R)-2-phosphoglycerate binding site. Residue E209 is the Proton donor of the active site. Mg(2+)-binding residues include D245, E286, and D313. K338, R367, S368, and K389 together coordinate (2R)-2-phosphoglycerate. The active-site Proton acceptor is the K338.

This sequence belongs to the enolase family. The cofactor is Mg(2+).

It is found in the cytoplasm. It localises to the secreted. Its subcellular location is the cell surface. It catalyses the reaction (2R)-2-phosphoglycerate = phosphoenolpyruvate + H2O. It participates in carbohydrate degradation; glycolysis; pyruvate from D-glyceraldehyde 3-phosphate: step 4/5. Catalyzes the reversible conversion of 2-phosphoglycerate (2-PG) into phosphoenolpyruvate (PEP). It is essential for the degradation of carbohydrates via glycolysis. This chain is Enolase, found in Parasynechococcus marenigrum (strain WH8102).